The primary structure comprises 87 residues: MRIKGVVLSYRRSKENQHTNVMIIKPLDINSREEASKLIGRLVVWKSPSGKVLKGKIVRVHGTRGAVRARFEKGLPGQALGDYVEII.

This sequence belongs to the eukaryotic ribosomal protein eL33 family.

In Pyrococcus horikoshii (strain ATCC 700860 / DSM 12428 / JCM 9974 / NBRC 100139 / OT-3), this protein is Large ribosomal subunit protein eL33.